Reading from the N-terminus, the 574-residue chain is Methionine--tRNA ligase (574 aa).

The short motif at P11–N21 is the 'HIGH' region element. Zn(2+) contacts are provided by C143, C146, C156, and C159. A 'KMSKS' region motif is present at residues K345–S349. T348 provides a ligand contact to ATP.

Belongs to the class-I aminoacyl-tRNA synthetase family. MetG type 1 subfamily. Monomer. The cofactor is Zn(2+).

Its subcellular location is the cytoplasm. The enzyme catalyses tRNA(Met) + L-methionine + ATP = L-methionyl-tRNA(Met) + AMP + diphosphate. Functionally, is required not only for elongation of protein synthesis but also for the initiation of all mRNA translation through initiator tRNA(fMet) aminoacylation. The protein is Methionine--tRNA ligase of Streptomyces avermitilis (strain ATCC 31267 / DSM 46492 / JCM 5070 / NBRC 14893 / NCIMB 12804 / NRRL 8165 / MA-4680).